The sequence spans 354 residues: Protein RecA (354 aa).

75–82 (GPESSGKT) is an ATP binding site.

This sequence belongs to the RecA family.

It is found in the cytoplasm. Its function is as follows. Can catalyze the hydrolysis of ATP in the presence of single-stranded DNA, the ATP-dependent uptake of single-stranded DNA by duplex DNA, and the ATP-dependent hybridization of homologous single-stranded DNAs. It interacts with LexA causing its activation and leading to its autocatalytic cleavage. In Cupriavidus taiwanensis (strain DSM 17343 / BCRC 17206 / CCUG 44338 / CIP 107171 / LMG 19424 / R1) (Ralstonia taiwanensis (strain LMG 19424)), this protein is Protein RecA.